The chain runs to 254 residues: Coenzyme F420:L-glutamate ligase (254 aa).

Residues 11 to 14 (IPLI), 40 to 41 (ST), and Lys-45 contribute to the GTP site. Asp-109 is a binding site for a divalent metal cation. Residue Asn-112 participates in GTP binding. A divalent metal cation-binding residues include Asp-150, Thr-151, and Glu-208. 206-213 (MGEGAGGI) contacts GTP.

The protein belongs to the CofE family. Homodimer. The cofactor is Mg(2+). Mn(2+) serves as cofactor. K(+) is required as a cofactor.

It carries out the reaction oxidized coenzyme F420-0 + GTP + L-glutamate = oxidized coenzyme F420-1 + GDP + phosphate + H(+). The catalysed reaction is oxidized coenzyme F420-1 + GTP + L-glutamate = oxidized coenzyme F420-2 + GDP + phosphate + H(+). It participates in cofactor biosynthesis; coenzyme F420 biosynthesis. Functionally, catalyzes the GTP-dependent successive addition of two or more gamma-linked L-glutamates to the L-lactyl phosphodiester of 7,8-didemethyl-8-hydroxy-5-deazariboflavin (F420-0) to form coenzyme F420-0-glutamyl-glutamate (F420-2) or polyglutamated F420 derivatives. This Methanosarcina acetivorans (strain ATCC 35395 / DSM 2834 / JCM 12185 / C2A) protein is Coenzyme F420:L-glutamate ligase.